An 860-amino-acid polypeptide reads, in one-letter code: DNA mismatch repair protein MutS (860 aa).

618–625 (GPNMGGKS) contributes to the ATP binding site.

Belongs to the DNA mismatch repair MutS family.

Its function is as follows. This protein is involved in the repair of mismatches in DNA. It is possible that it carries out the mismatch recognition step. This protein has a weak ATPase activity. This is DNA mismatch repair protein MutS from Shewanella piezotolerans (strain WP3 / JCM 13877).